The sequence spans 339 residues: Ketol-acid reductoisomerase (NADP(+)) (339 aa).

The KARI N-terminal Rossmann domain occupies 1 to 182 (MRVYYDRDAD…GGGRAGIIET (182 aa)). NADP(+) contacts are provided by residues 24-27 (YGSQ), arginine 48, serine 51, and 83-86 (DEGQ). The active site involves histidine 108. Glycine 134 contributes to the NADP(+) binding site. A KARI C-terminal knotted domain is found at 183 to 328 (TFKEEVETDL…EKLRAMMPWI (146 aa)). 4 residues coordinate Mg(2+): aspartate 191, glutamate 195, glutamate 227, and glutamate 231. Serine 252 contacts substrate.

Belongs to the ketol-acid reductoisomerase family. Mg(2+) serves as cofactor.

It catalyses the reaction (2R)-2,3-dihydroxy-3-methylbutanoate + NADP(+) = (2S)-2-acetolactate + NADPH + H(+). The enzyme catalyses (2R,3R)-2,3-dihydroxy-3-methylpentanoate + NADP(+) = (S)-2-ethyl-2-hydroxy-3-oxobutanoate + NADPH + H(+). It functions in the pathway amino-acid biosynthesis; L-isoleucine biosynthesis; L-isoleucine from 2-oxobutanoate: step 2/4. The protein operates within amino-acid biosynthesis; L-valine biosynthesis; L-valine from pyruvate: step 2/4. In terms of biological role, involved in the biosynthesis of branched-chain amino acids (BCAA). Catalyzes an alkyl-migration followed by a ketol-acid reduction of (S)-2-acetolactate (S2AL) to yield (R)-2,3-dihydroxy-isovalerate. In the isomerase reaction, S2AL is rearranged via a Mg-dependent methyl migration to produce 3-hydroxy-3-methyl-2-ketobutyrate (HMKB). In the reductase reaction, this 2-ketoacid undergoes a metal-dependent reduction by NADPH to yield (R)-2,3-dihydroxy-isovalerate. The sequence is that of Ketol-acid reductoisomerase (NADP(+)) from Gluconobacter oxydans (strain 621H) (Gluconobacter suboxydans).